The sequence spans 228 residues: Isonitrile hydratase (228 aa).

Cys-101 is a catalytic residue.

As to quaternary structure, homodimer.

The enzyme catalyses N-cyclohexylformamide = cyclohexyl isocyanide + H2O. Sensitive to thiol reagents and oxidizing reagents, but is not influenced by chelators or reducing reagents. Its function is as follows. Catalyzes the hydration of cyclohexyl isocyanide to N-cyclohexylformamide. Acts on various isonitriles, but not on nitriles or amides. Probably involved in detoxification. The protein is Isonitrile hydratase (inhA) of Pseudomonas putida (Arthrobacter siderocapsulatus).